Consider the following 403-residue polypeptide: Keratin, type I cytoskeletal 19 (403 aa).

A head region spans residues 1–82 (MTSYSYRQTS…AVSDGLLSGN (82 aa)). Arginine 7 carries the omega-N-methylarginine modification. Serine 14 and serine 22 each carry phosphoserine. Arginine 24 bears the Asymmetric dimethylarginine; alternate mark. Position 24 is an omega-N-methylarginine; alternate (arginine 24). Serine 27 is modified (phosphoserine). Omega-N-methylarginine is present on arginine 32. 2 positions are modified to phosphoserine: serine 35 and serine 40. Omega-N-methylarginine is present on residues arginine 43 and arginine 51. The residue at position 57 (serine 57) is a Phosphoserine. Omega-N-methylarginine is present on arginine 64. Phosphoserine occurs at positions 67 and 75. The interval 83–118 (EKITMQNLNDRLASYLDKVRALEQANGELEVKIRDW) is coil 1A. One can recognise an IF rod domain in the interval 83–394 (EKITMQNLND…SLLEGQEAHY (312 aa)). Residues 119–136 (YQKQGPGPSRDYNHYFKT) form a linker 1 region. The tract at residues 137 to 228 (IEDLRDKILG…KNHEEEITAL (92 aa)) is coil 1B. A linker 12 region spans residues 229-251 (RSQVGGQVSVEVDSTPGVDLAKI). The interval 247–393 (DLAKILSEMR…RSLLEGQEAH (147 aa)) is necessary for interaction with PNN. Positions 252–390 (LSEMRSQYEI…ATYRSLLEGQ (139 aa)) are coil 2. The residue at position 326 (threonine 326) is a Phosphothreonine. A rod-like helical tail region spans residues 391–403 (EAHYNNLPTPKAI). Phosphotyrosine is present on tyrosine 394.

It belongs to the intermediate filament family. As to quaternary structure, heterotetramer of two type I and two type II keratins. Interacts with PNN and the actin-binding domain of DMD.

Functionally, involved in the organization of myofibers. Together with KRT8, helps to link the contractile apparatus to dystrophin at the costameres of striated muscle. This Mus musculus (Mouse) protein is Keratin, type I cytoskeletal 19 (Krt19).